A 344-amino-acid chain; its full sequence is Arginine N-succinyltransferase (344 aa).

L125 contacts succinyl-CoA. Catalysis depends on H229, which acts as the Proton donor.

This sequence belongs to the arginine N-succinyltransferase family.

It carries out the reaction succinyl-CoA + L-arginine = N(2)-succinyl-L-arginine + CoA + H(+). Its pathway is amino-acid degradation; L-arginine degradation via AST pathway; L-glutamate and succinate from L-arginine: step 1/5. In terms of biological role, catalyzes the transfer of succinyl-CoA to arginine to produce N(2)-succinylarginine. The chain is Arginine N-succinyltransferase from Shigella boydii serotype 18 (strain CDC 3083-94 / BS512).